We begin with the raw amino-acid sequence, 215 residues long: MEAAFWHQKWADNQIGFHQAQANPYLQRYWPGLGLAAGSRVLVPLCGKSLDMAWLAGQGYRVRGIELSRRAVEDFFQEQGLQAQVWQQGAFEVWCSGEVELWCGDFFALRAEDVADCVGLYDRAALIALPPQMRERYMGLLSQILPVGSGLLVTLDYEQKLLAGPPFSVADEEVRRGFAGWQVEEVEARDVIGESPKFLQAGVKRLVERVYRVQF.

Residues tryptophan 10, leucine 45, glutamate 66, and arginine 123 each contribute to the S-adenosyl-L-methionine site.

Belongs to the class I-like SAM-binding methyltransferase superfamily. TPMT family.

The protein localises to the cytoplasm. It catalyses the reaction S-adenosyl-L-methionine + a thiopurine = S-adenosyl-L-homocysteine + a thiopurine S-methylether.. The sequence is that of Thiopurine S-methyltransferase from Pseudomonas putida (strain W619).